Here is a 373-residue protein sequence, read N- to C-terminus: Histidine protein methyltransferase 1 homolog (373 aa).

Residues 30–42 (SKESLVSERQKGT) are compositionally biased toward basic and acidic residues. 2 disordered regions span residues 30–52 (SKES…STEQ) and 64–94 (KSER…HEEK). Positions 70–88 (APSQDPDSSFGAANSSSNL) are enriched in polar residues. Phosphoserine is present on residues Ser-72 and Ser-77. At His-154 the chain carries Tele-methylhistidine. Residues 168–172 (IWECT), Gly-195, and 216–218 (QDY) each bind S-adenosyl-L-methionine. Residues 247 to 253 (PDVKRLR) carry the Nuclear localization signal motif. Residues 269–271 (GEW) and Ser-294 each bind S-adenosyl-L-methionine.

Belongs to the methyltransferase superfamily. METTL18 family. Interacts with GRWD1 and members of the heat shock protein 90 and 70 families; these proteins may possibly be methylation substrates for the enzyme. In terms of processing, monomethylated at His-154 through automethylation. Automethylation at His-154 positively regulates the methyltransferase activity toward RPL3. Probably methylated on other residues.

The protein localises to the cytoplasm. It localises to the cytosol. It is found in the nucleus. Its subcellular location is the nucleolus. The enzyme catalyses L-histidyl-[protein] + S-adenosyl-L-methionine = N(tele)-methyl-L-histidyl-[protein] + S-adenosyl-L-homocysteine + H(+). In terms of biological role, protein-L-histidine N-tele-methyltransferase that specifically monomethylates RPL3, thereby regulating translation elongation. Histidine methylation of RPL3 regulates translation elongation by slowing ribosome traversal on tyrosine codons: slower elongation provides enough time for proper folding of synthesized proteins and prevents cellular aggregation of tyrosine-rich proteins. This chain is Histidine protein methyltransferase 1 homolog (METTL18), found in Bos taurus (Bovine).